Here is a 167-residue protein sequence, read N- to C-terminus: Ribosome-binding factor A (167 aa).

Residues 127–167 are disordered; it reads SRANAQYAGDADPYKHDEPDDDDFDDDDDVEVEDWDDDDEA. Residues 145–167 show a composition bias toward acidic residues; that stretch reads PDDDDFDDDDDVEVEDWDDDDEA.

Belongs to the RbfA family. As to quaternary structure, monomer. Binds 30S ribosomal subunits, but not 50S ribosomal subunits or 70S ribosomes.

The protein localises to the cytoplasm. Functionally, one of several proteins that assist in the late maturation steps of the functional core of the 30S ribosomal subunit. Associates with free 30S ribosomal subunits (but not with 30S subunits that are part of 70S ribosomes or polysomes). Required for efficient processing of 16S rRNA. May interact with the 5'-terminal helix region of 16S rRNA. This Bifidobacterium adolescentis (strain ATCC 15703 / DSM 20083 / NCTC 11814 / E194a) protein is Ribosome-binding factor A.